The following is a 232-amino-acid chain: dTTP/UTP pyrophosphatase (232 aa).

D103 acts as the Proton acceptor in catalysis.

This sequence belongs to the Maf family. YhdE subfamily. A divalent metal cation serves as cofactor.

It localises to the cytoplasm. The enzyme catalyses dTTP + H2O = dTMP + diphosphate + H(+). It catalyses the reaction UTP + H2O = UMP + diphosphate + H(+). Nucleoside triphosphate pyrophosphatase that hydrolyzes dTTP and UTP. May have a dual role in cell division arrest and in preventing the incorporation of modified nucleotides into cellular nucleic acids. This is dTTP/UTP pyrophosphatase from Bartonella henselae (strain ATCC 49882 / DSM 28221 / CCUG 30454 / Houston 1) (Rochalimaea henselae).